Reading from the N-terminus, the 80-residue chain is Putative membrane protein insertion efficiency factor (80 aa).

Belongs to the UPF0161 family.

The protein resides in the cell inner membrane. In terms of biological role, could be involved in insertion of integral membrane proteins into the membrane. The sequence is that of Putative membrane protein insertion efficiency factor from Picosynechococcus sp. (strain ATCC 27264 / PCC 7002 / PR-6) (Agmenellum quadruplicatum).